The chain runs to 108 residues: Latartoxin-2c (108 aa).

The N-terminal stretch at 1-19 (MKVLVITALCFILLQNVLG) is a signal peptide. The propeptide at 20–42 (EDTYEDLQNYIENLINENQDEAR) is removed in mature form. The Processing quadruplet motif motif lies at 39-42 (DEAR). 4 cysteine pairs are disulfide-bonded: C44-C61, C51-C72, C60-C84, and C74-C82. I107 carries the isoleucine amide modification.

It belongs to the neurotoxin 19 (CSTX) family. 11 (latartoxin) subfamily. Contains 4 disulfide bonds. Post-translationally, cleavage of the propeptide depends on the processing quadruplet motif (XXXR, with at least one of X being E). As to expression, expressed by the venom gland.

Its subcellular location is the secreted. Functionally, insect toxin. In Lachesana tarabaevi (Spider), this protein is Latartoxin-2c.